Here is a 244-residue protein sequence, read N- to C-terminus: Small ribosomal subunit protein uS3 (244 aa).

The KH type-2 domain occupies 39–107 (VREMLRKKLA…PAHINVTEVR (69 aa)). A disordered region spans residues 213–244 (VGQEKQDDSPRNDRNDRGDRGDRPSRPAREAR). The segment covering 216-244 (EKQDDSPRNDRNDRGDRGDRPSRPAREAR) has biased composition (basic and acidic residues).

The protein belongs to the universal ribosomal protein uS3 family. As to quaternary structure, part of the 30S ribosomal subunit. Forms a tight complex with proteins S10 and S14.

In terms of biological role, binds the lower part of the 30S subunit head. Binds mRNA in the 70S ribosome, positioning it for translation. This Xanthomonas axonopodis pv. citri (strain 306) protein is Small ribosomal subunit protein uS3.